A 124-amino-acid chain; its full sequence is V-type proton ATPase subunit F 1 (124 aa).

This sequence belongs to the V-ATPase F subunit family. V-ATPase is a heteromultimeric enzyme made up of two complexes: the ATP-hydrolytic V1 complex and the proton translocation V0 complex. The V1 complex consists of three catalytic AB heterodimers that form a heterohexamer, three peripheral stalks each consisting of EG heterodimers, one central rotor including subunits D and F, and the regulatory subunits C and H. The proton translocation complex V0 consists of the proton transport subunit a, a ring of proteolipid subunits c9c'', rotary subunit d, subunits e and f, and the accessory subunits VhaAC45 and ATP6AP2.

In terms of biological role, subunit of the V1 complex of vacuolar(H+)-ATPase (V-ATPase), a multisubunit enzyme composed of a peripheral complex (V1) that hydrolyzes ATP and a membrane integral complex (V0) that translocates protons. V-ATPase is responsible for acidifying and maintaining the pH of intracellular compartments and in some cell types, is targeted to the plasma membrane, where it is responsible for acidifying the extracellular environment. In Drosophila pseudoobscura pseudoobscura (Fruit fly), this protein is V-type proton ATPase subunit F 1 (Vha14).